We begin with the raw amino-acid sequence, 492 residues long: Glutamyl-tRNA(Gln) amidotransferase subunit A (492 aa).

Catalysis depends on charge relay system residues lysine 78 and serine 158. The active-site Acyl-ester intermediate is the serine 182.

This sequence belongs to the amidase family. GatA subfamily. As to quaternary structure, heterotrimer of A, B and C subunits.

The enzyme catalyses L-glutamyl-tRNA(Gln) + L-glutamine + ATP + H2O = L-glutaminyl-tRNA(Gln) + L-glutamate + ADP + phosphate + H(+). Functionally, allows the formation of correctly charged Gln-tRNA(Gln) through the transamidation of misacylated Glu-tRNA(Gln) in organisms which lack glutaminyl-tRNA synthetase. The reaction takes place in the presence of glutamine and ATP through an activated gamma-phospho-Glu-tRNA(Gln). The polypeptide is Glutamyl-tRNA(Gln) amidotransferase subunit A (Rhodopseudomonas palustris (strain BisB5)).